The sequence spans 361 residues: Phosphoserine aminotransferase (361 aa).

Residues S9 and R42 each contribute to the L-glutamate site. Pyridoxal 5'-phosphate is bound by residues 76–77 (AR), W102, T153, D173, and Q196. The residue at position 197 (K197) is an N6-(pyridoxal phosphate)lysine. 238–239 (NT) is a pyridoxal 5'-phosphate binding site.

This sequence belongs to the class-V pyridoxal-phosphate-dependent aminotransferase family. SerC subfamily. As to quaternary structure, homodimer. Pyridoxal 5'-phosphate serves as cofactor.

The protein localises to the cytoplasm. It catalyses the reaction O-phospho-L-serine + 2-oxoglutarate = 3-phosphooxypyruvate + L-glutamate. The enzyme catalyses 4-(phosphooxy)-L-threonine + 2-oxoglutarate = (R)-3-hydroxy-2-oxo-4-phosphooxybutanoate + L-glutamate. Its pathway is amino-acid biosynthesis; L-serine biosynthesis; L-serine from 3-phospho-D-glycerate: step 2/3. It participates in cofactor biosynthesis; pyridoxine 5'-phosphate biosynthesis; pyridoxine 5'-phosphate from D-erythrose 4-phosphate: step 3/5. Catalyzes the reversible conversion of 3-phosphohydroxypyruvate to phosphoserine and of 3-hydroxy-2-oxo-4-phosphonooxybutanoate to phosphohydroxythreonine. The polypeptide is Phosphoserine aminotransferase (Sodalis glossinidius (strain morsitans)).